The primary structure comprises 70 residues: Large ribosomal subunit protein bL31 (70 aa).

Residues Cys-16, Cys-18, Cys-37, and Cys-40 each coordinate Zn(2+).

It belongs to the bacterial ribosomal protein bL31 family. Type A subfamily. Part of the 50S ribosomal subunit. Requires Zn(2+) as cofactor.

Its function is as follows. Binds the 23S rRNA. This chain is Large ribosomal subunit protein bL31, found in Haemophilus influenzae (strain 86-028NP).